The primary structure comprises 675 residues: DNA ligase (675 aa).

Residues 33-37 (DAEYD), 82-83 (SL), and Glu-115 each bind NAD(+). Lys-117 acts as the N6-AMP-lysine intermediate in catalysis. Residues Arg-138, Glu-175, Lys-293, and Lys-317 each coordinate NAD(+). The Zn(2+) site is built by Cys-411, Cys-414, Cys-429, and Cys-435. The 82-residue stretch at 594 to 675 (IADNPLKDKT…LIGYFTTIVS (82 aa)) folds into the BRCT domain.

The protein belongs to the NAD-dependent DNA ligase family. LigA subfamily. It depends on Mg(2+) as a cofactor. Mn(2+) serves as cofactor.

It catalyses the reaction NAD(+) + (deoxyribonucleotide)n-3'-hydroxyl + 5'-phospho-(deoxyribonucleotide)m = (deoxyribonucleotide)n+m + AMP + beta-nicotinamide D-nucleotide.. Functionally, DNA ligase that catalyzes the formation of phosphodiester linkages between 5'-phosphoryl and 3'-hydroxyl groups in double-stranded DNA using NAD as a coenzyme and as the energy source for the reaction. It is essential for DNA replication and repair of damaged DNA. The sequence is that of DNA ligase from Glaesserella parasuis serovar 5 (strain SH0165) (Haemophilus parasuis).